The following is a 367-amino-acid chain: DNA replication and repair protein RecF (367 aa).

30–37 is an ATP binding site; sequence GANGSGKT.

Belongs to the RecF family.

The protein resides in the cytoplasm. In terms of biological role, the RecF protein is involved in DNA metabolism; it is required for DNA replication and normal SOS inducibility. RecF binds preferentially to single-stranded, linear DNA. It also seems to bind ATP. This chain is DNA replication and repair protein RecF, found in Pseudomonas putida (strain W619).